The sequence spans 125 residues: Small ribosomal subunit protein uS12 (125 aa).

At Asp-89 the chain carries 3-methylthioaspartic acid.

Belongs to the universal ribosomal protein uS12 family. Part of the 30S ribosomal subunit. Contacts proteins S8 and S17. May interact with IF1 in the 30S initiation complex.

Functionally, with S4 and S5 plays an important role in translational accuracy. In terms of biological role, interacts with and stabilizes bases of the 16S rRNA that are involved in tRNA selection in the A site and with the mRNA backbone. Located at the interface of the 30S and 50S subunits, it traverses the body of the 30S subunit contacting proteins on the other side and probably holding the rRNA structure together. The combined cluster of proteins S8, S12 and S17 appears to hold together the shoulder and platform of the 30S subunit. The chain is Small ribosomal subunit protein uS12 from Wigglesworthia glossinidia brevipalpis.